A 226-amino-acid chain; its full sequence is Ras-related protein RGP1 (226 aa).

A GTP-binding site is contributed by 25–32 (GDSAVGKS). Residues 47–55 (SKATIGVEF) carry the Effector region motif. Residues 73-77 (DTAGQ) and 131-134 (NKSD) each bind GTP. Residues Cys223 and Cys224 are each lipidated (S-geranylgeranyl cysteine).

Belongs to the small GTPase superfamily. Rab family.

It localises to the cell membrane. Its function is as follows. May play an important role in plant growth and development. This chain is Ras-related protein RGP1 (RGP1), found in Oryza sativa subsp. japonica (Rice).